A 236-amino-acid chain; its full sequence is MPRSKRSKLVTLAQTDKKGRENKERIFDEVREALDTYRYVWVLHLDDVRTPVLQEIRTSWAGSKLIMGKRKVLQKALGEKREEEYKENLYQLSKLCSGVTGLLFTDEDVNTVKEYFKSYVRSDYSRPNTKAPLTFTIPEGIVYSRGGQIPAEEDVPMIHSLEPTMRNKFEIPTKIKAGKITIDSPYLVCTEGEKLDVRQALILKQFGIAASEFKVKVSAYYDNDSSTVESTNINME.

Belongs to the universal ribosomal protein uL10 family. As to quaternary structure, associates with the pre-60S ribosomal particle.

It is found in the nucleus. The protein localises to the nucleolus. It localises to the cytoplasm. Component of the ribosome assembly machinery. Nuclear paralog of the ribosomal protein P0, it binds pre-60S subunits at an early stage of assembly in the nucleolus, and is replaced by P0 in cytoplasmic pre-60S subunits and mature 80S ribosomes. The polypeptide is Ribosome assembly factor MRT4 (Saccharomyces cerevisiae (strain ATCC 204508 / S288c) (Baker's yeast)).